Consider the following 3013-residue polypeptide: Genome polyprotein (3013 aa).

N-acetylserine; by host is present on Ser-2. The interaction with STAT1 stretch occupies residues 2–23 (STLPKPQKRNQRNTNRRPQDVK). The tract at residues 2–58 (STLPKPQKRNQRNTNRRPQDVKFPGGGQIVGGVYLLPRRGPRLGVRATRKTSERSQP) is interaction with EIF2AK2/PKR. Residues 2–59 (STLPKPQKRNQRNTNRRPQDVKFPGGGQIVGGVYLLPRRGPRLGVRATRKTSERSQPR) form an interaction with DDX3X region. Positions 2-75 (STLPKPQKRN…PKARRQTGRT (74 aa)) are disordered. Topologically, residues 2-168 (STLPKPQKRN…EDGINYATGN (167 aa)) are cytoplasmic. 2 consecutive short sequence motifs (nuclear localization signal) follow at residues 5–13 (PKPQKRNQR) and 38–43 (PRRGPR). The segment covering 7–16 (PQKRNQRNTN) has biased composition (basic residues). Residues 32 to 47 (GGVYLLPRRGPRLGVR) show a composition bias toward low complexity. Ser-53 bears the Phosphoserine; by host mark. Short sequence motifs (nuclear localization signal) lie at residues 58–64 (PRGRRQP) and 66–71 (PKARRQ). Positions 58–72 (PRGRRQPIPKARRQT) are enriched in basic residues. A phosphoserine; by host mark is found at Ser-99 and Ser-116. The important for endoplasmic reticulum and mitochondrial localization stretch occupies residues 112–152 (PRRRSRNLGKVIDTLTCGFADLMGYIPVVGAPLGGVAAALA). The interaction with APOA2 stretch occupies residues 122–173 (VIDTLTCGFADLMGYIPVVGAPLGGVAAALAHGVRAVEDGINYATGNLPGCS). Residues 164–167 (YATG) form an important for lipid droplets localization region. A helical transmembrane segment spans residues 169 to 189 (LPGCSFSIFLLALLSCLTTPA). The propeptide at 178–191 (LLALLSCLTTPASA) is ER anchor for the core protein, removed in mature form by host signal peptidase. At 190–358 (SAVHYANKSG…TGGHWGILAG (169 aa)) the chain is on the lumenal side. N-linked (GlcNAc...) asparagine; by host glycosylation is found at Asn-196, Asn-209, Asn-234, and Asn-250. The segment at 265-296 (MVGAAAFCSAMYVGDLCGGIFLVGQLFSFNPR) is important for fusion. Asn-305 carries N-linked (GlcNAc...) asparagine; by host glycosylation. A helical membrane pass occupies residues 359–379 (ILYYSMVANWAKVLCILFLFA). Over 380–723 (GVDATTRTTG…WEYVVLAFLL (344 aa)) the chain is Lumenal. The tract at residues 385 to 412 (TRTTGAQAARATLGFTGLFQTGAKQNIH) is HVR1. N-linked (GlcNAc...) (high mannose) asparagine; by host glycosylation is found at Asn-417, Asn-423, and Asn-430. 4 cysteine pairs are disulfide-bonded: Cys-429-Cys-553, Cys-452-Cys-459, Cys-487-Cys-495, and Cys-504-Cys-509. Asn-448 is a glycosylation site (N-linked (GlcNAc...) asparagine; by host). The HVR2 stretch occupies residues 475-479 (ANVSG). Residue Asn-476 is glycosylated (N-linked (GlcNAc...) asparagine; by host). The tract at residues 481–494 (SEDRPYCWHYAPRP) is CD81-binding 1. Asn-533 carries N-linked (GlcNAc...) asparagine; by host glycosylation. A CD81-binding 2 region spans residues 545 to 552 (PPAGAWYG). N-linked (GlcNAc...) asparagine; by host glycosylation occurs at Asn-557. 4 disulfide bridges follow: Cys-565–Cys-570, Cys-579–Cys-583, Cys-595–Cys-618, and Cys-605–Cys-642. N-linked (GlcNAc...) (high mannose) asparagine; by host glycosylation is found at Asn-621 and Asn-643. Residues Cys-650 and Cys-675 are joined by a disulfide bond. Positions 658–669 (IEMSPLLFSTTE) are PKR/eIF2-alpha phosphorylation homology domain (PePHD). A helical membrane pass occupies residues 724–744 (LADARICACLWMVLLISQVEA). Residues 745–755 (ALENLIVLNAA) lie on the Lumenal side of the membrane. The helical transmembrane segment at 756–776 (SAASSQGWIYCLVFICCAWYI) threads the bilayer. Residues 777–780 (KGRV) lie on the Cytoplasmic side of the membrane. Residues 781–801 (VPGATYAILHLWPLLLLVLAL) traverse the membrane as a helical segment. At 802–811 (PQRAYAQDRE) the chain is on the lumenal side. The chain crosses the membrane as a helical span at residues 812–832 (QGASIGVVVIAAITIFTLTPA). At 833 to 879 (YKTMLVHFLWWNQYFIARSEALIQQWVPSLRVRGGRDAVILLTCLLH) the chain is on the cytoplasmic side. Residues 880 to 900 (PSLGFDITKMLLALLGPLYLL) traverse the membrane as a helical segment. Residues 901-926 (QVSLLRVPYYVRAHALLRVCILVRRV) lie on the Lumenal side of the membrane. One can recognise a Peptidase C18 domain in the interval 901–1024 (QVSLLRVPYY…DMKSMGWRLL (124 aa)). The protease NS2-3 stretch occupies residues 902 to 1204 (VSLLRVPYYV…PVENMETTMR (303 aa)). Cys-920 carries S-palmitoyl cysteine; by host lipidation. A helical membrane pass occupies residues 927–947 (AGGKYIQAALLKLGAWTGTYI). The tract at residues 927–947 (AGGKYIQAALLKLGAWTGTYI) is interaction with host SCPS1. Over 948 to 1655 (YDHLAPLSTW…CMAADLEVIT (708 aa)) the chain is Cytoplasmic. Active-site for protease NS2 activity; shared with dimeric partner residues include His-950, Glu-970, and Cys-991. The 182-residue stretch at 1025-1206 (APITAYCQQT…ENMETTMRSP (182 aa)) folds into the Peptidase S29 domain. Catalysis depends on charge relay system; for serine protease NS3 activity residues His-1081 and Asp-1105. Residues Cys-1121 and Cys-1123 each contribute to the Zn(2+) site. Ser-1163 functions as the Charge relay system; for serine protease NS3 activity in the catalytic mechanism. Zn(2+) contacts are provided by Cys-1169 and His-1173. Positions 1215–1367 (PAVPQTYQVG…PNITETALPS (153 aa)) constitute a Helicase ATP-binding domain. 1228–1235 (APTGSGKS) contributes to the ATP binding site. Residues Ser-1235 and Glu-1315 each contribute to the Mg(2+) site. The DECH box motif lies at 1314–1317 (DECH). The 163-residue stretch at 1374-1536 (YGKAIPLECI…ELTPSETTVR (163 aa)) folds into the Helicase C-terminal domain. The interval 1484 to 1496 (QRRGRTGRGKPGV) is RNA-binding. A helical membrane pass occupies residues 1656 to 1676 (STWVLAGGIVAALAAYCLTVG). Residues 1677 to 1688 (SVVICGRIVTSG) are NS3-binding. Residues 1677-1803 (SVVICGRIVT…ALTSPLSTST (127 aa)) are Cytoplasmic-facing. Residues 1804 to 1824 (TLLLNILGGWVASQLAPPTAS) traverse the membrane as a helical segment. Over 1825 to 1826 (TA) the chain is Lumenal. Residues 1827-1847 (FVVSGLAGAAVGSIGLGKVII) form a helical membrane-spanning segment. A topological domain (cytoplasmic) is located at residue Asp-1848. The helical transmembrane segment at 1849-1869 (ILAGYGAGVSGALVAFKIMSG) threads the bilayer. Residues 1870–1879 (EAPAVEDMVN) lie on the Lumenal side of the membrane. Residues 1880-1900 (LLPALLSPGALVVGVVCAAVL) traverse the membrane as a helical segment. At 1901-1970 (RRHVGPSEGA…WISGDWSAPC (70 aa)) the chain is on the cytoplasmic side. Residue Cys-1970 is the site of S-palmitoyl cysteine; by host attachment. An intramembrane segment occupies 1971–2000 (SCSWLKDVWDWVCTVLSDFKTWLRAKLVPT). Over 2001–2992 (LPGIPFISCQ…FHSVSRARPR (992 aa)) the chain is Cytoplasmic. Zn(2+) is bound by residues Cys-2009, Cys-2027, Cys-2029, and Cys-2050. Positions 2118-2206 (EFFTEVDGVR…ASSSASQLSA (89 aa)) are FKBP8-binding. A transcriptional activation region spans residues 2118 to 2331 (EFFTEVDGVR…PVPPPRKKRV (214 aa)). An interaction with non-structural protein 4A region spans residues 2133 to 2137 (PPCRP). Positions 2187 to 2440 (RLARGSPPSL…ALITPCAAEE (254 aa)) are interaction with host SKP2. Ser-2192, Ser-2195, Ser-2199, Ser-2202, Ser-2205, and Ser-2208 each carry phosphoserine; by host. An ISDR region spans residues 2208–2247 (SLKATCTTAGKHPDAELIEANLLWRQEVGGNITRVESENK). The tract at residues 2208–2273 (SLKATCTTAG…REISVGAECF (66 aa)) is interaction with EIF2AK2/PKR. An NS4B-binding region spans residues 2247–2305 (KIIVLDSFDPLIAETDDREISVGAECFNPPRPKFPPALPVWARPDYNPPLLQPWKAPDY). A V3 region spans residues 2298–2376 (QPWKAPDYEP…STLSSDMTPP (79 aa)). The interval 2316–2411 (PPKGLPPVPP…PDLSSGSWST (96 aa)) is disordered. Residues 2321–2324 (PPVP) carry the SH3-binding motif. The short motif at 2326-2334 (PRKKRVVQL) is the Nuclear localization signal element. The segment covering 2347–2373 (AQTSFPPSTATLSEDSGRETSTLSSDM) has biased composition (polar residues). Residues 2375–2385 (PPREEADRASD) are compositionally biased toward basic and acidic residues. Residue Ser-2464 is modified to Phosphoserine; by host. Positions 2636 to 2754 (PMGFSYDTRC…ISESMGVAED (119 aa)) constitute a RdRp catalytic domain. 3 residues coordinate Mg(2+): Asp-2642, Asp-2740, and Asp-2741. A helical transmembrane segment spans residues 2993–3013 (NLLLCLLLLTVGVGIFLLPAR).

This sequence belongs to the hepacivirus polyprotein family. Homooligomer. Interacts with E1 (via C-terminus). Interacts with the non-structural protein 5A. Interacts (via N-terminus) with host STAT1 (via SH2 domain); this interaction results in decreased STAT1 phosphorylation and ubiquitin-mediated proteasome-dependent STAT1 degradation, leading to decreased IFN-stimulated gene transcription. Interacts with host STAT3; this interaction constitutively activates STAT3. Interacts with host LTBR receptor. Interacts with host TNFRSF1A receptor and possibly induces apoptosis. Interacts with host HNRPK. Interacts with host YWHAE. Interacts with host UBE3A/E6AP. Interacts with host DDX3X. Interacts with host APOA2. Interacts with host RXRA protein. Interacts with host SP110 isoform 3/Sp110b; this interaction sequesters the transcriptional corepressor SP110 away from the nucleus. Interacts with host CREB3 nuclear transcription protein; this interaction triggers cell transformation. Interacts with host ACY3. Interacts with host C1QR1. Interacts with host RBM24; this interaction, which enhances the interaction of the mature core protein with 5'-UTR, may inhibit viral translation and favor replication. Interacts with host EIF2AK2/PKR; this interaction induces the autophosphorylation of EIF2AK2. Part of the viral assembly initiation complex composed of NS2, E1, E2, NS3, NS4A, NS5A and the mature core protein. As to quaternary structure, forms a heterodimer with envelope glycoprotein E2. Interacts with mature core protein. Interacts with protease NS2. The heterodimer E1/E2 interacts with host CLDN1; this interaction plays a role in viral entry into host cell. Interacts with host SPSB2 (via C-terminus). Part of the viral assembly initiation complex composed of NS2, E1, E2, NS3, NS4A, NS5A and the mature core protein. Interacts with host NEURL3; this interaction prevents E1 binding to glycoprotein E2. In terms of assembly, forms a heterodimer with envelope glycoprotein E1. Interacts with host CD81 and SCARB1 receptors; these interactions play a role in viral entry into host cell. Interacts with host EIF2AK2/PKR; this interaction inhibits EIF2AK2 and probably allows the virus to evade the innate immune response. Interacts with host CD209/DC-SIGN and CLEC4M/DC-SIGNR. Interact with host SPCS1; this interaction is essential for viral particle assembly. Interacts with protease NS2. The heterodimer E1/E2 interacts with host CLDN1; this interaction plays a role in viral entry into host cell. Part of the viral assembly initiation complex composed of NS2, E1, E2, NS3, NS4A, NS5A and the mature core protein. Interacts with host SLC3A2/4F2hc; the interaction may facilitate viral entry into host cell. Interacts with human PLSCR1. Homohexamer. Homoheptamer. Interacts with protease NS2. As to quaternary structure, homodimer. Interacts with host SPCS1; this interaction is essential for viral particle assembly. Interacts with envelope glycoprotein E1. Interacts with envelope glycoprotein E2. Interacts with viroporin p7. Interacts with serine protease/helicase NS3. Part of the replication complex composed of NS2, NS3, NS4A, NS4B, NS5A and the RNA-directed RNA polymerase embedded in an ER-derived membranous web. Part of the viral assembly initiation complex composed of NS2, E1, E2, NS3, NS4A, NS5A and the mature core protein. In terms of assembly, interacts with protease NS2. Interacts with non-structural protein 4A; this interaction stabilizes the folding of NS3 serine protease. NS3-NS4A interaction is essential for NS3 activation and allows membrane anchorage of the latter. NS3/NS4A complex also prevents phosphorylation of host IRF3, thus preventing the establishment of dsRNA induced antiviral state. Interacts with host MAVS; this interaction leads to the cleavage and inhibition of host MAVS. Interacts with host TICAM1; this interaction leads to the cleavage and inhibition of host TICAM1. Interacts with host TANK-binding kinase/TBK1; this interaction results in the inhibition of the association between TBK1 and IRF3, which leads to the inhibition of IRF3 activation. Interacts with host RBM24. Part of the replication complex composed of NS2, NS3, NS4A, NS4B, NS5A and the RNA-directed RNA polymerase embedded in an ER-derived membranous web. Part of the viral assembly initiation complex composed of NS2, E1, E2, NS3, NS4A, NS5A and the mature core protein. Interacts with NS3 serine protease; this interaction stabilizes the folding of NS3 serine protease. NS3-NS4A interaction is essential for NS3 activation and allows membrane anchorage of the latter. Interacts with non-structural protein 5A (via N-terminus). Part of the replication complex composed of NS2, NS3, NS4A, NS4B, NS5A and the RNA-directed RNA polymerase embedded in an ER-derived membranous web. Part of the viral assembly initiation complex composed of NS2, E1, E2, NS3, NS4A, NS5A and the mature core protein. As to quaternary structure, homomultimer. Interacts with non-structural protein NS5A. Interacts with host PLA2G4C; this interaction likely initiates the recruitment of replication complexes to lipid droplets. Interacts with host STING; this interaction disrupts the interaction between STING and TBK1 thereby suppressing the interferon signaling. Part of the replication complex composed of NS2, NS3, NS4A, NS4B, NS5A and the RNA-directed RNA polymerase embedded in an ER-derived membranous web. In terms of assembly, monomer. Homodimer; dimerization is required for RNA-binding. Interacts with the mature core protein. Interacts (via N-terminus) with non-structural protein 4A. Interacts with non-structural protein 4B. Interacts (via region D2) with RNA-directed RNA polymerase. Part of the viral assembly initiation complex composed of NS2, E1, E2, NS3, NS4A, NS5A and the mature core protein. Part of the replication complex composed of NS2, NS3, NS4A, NS4B, NS5A and the RNA-directed RNA polymerase embedded in an ER-derived membranous web. Interacts with host GRB2. Interacts with host BIN1. Interacts with host PIK3R1. Interacts with host SRCAP. Interacts with host FKBP8. Interacts (via C-terminus) with host VAPB (via MSP domain). Interacts with host EIF2AK2/PKR; this interaction leads to disruption of EIF2AK2 dimerization by NS5A and probably allows the virus to evade the innate immune response. Interacts (via N-terminus) with host PACSIN2 (via N-terminus); this interaction attenuates protein kinase C alpha-mediated phosphorylation of PACSIN2 by disrupting the interaction between PACSIN2 and PRKCA. Interacts (via N-terminus) with host SRC kinase (via SH2 domain). Interacts with most Src-family kinases. Interacts with host IFI27 and SKP2; promotes the ubiquitin-mediated proteasomal degradation of NS5A. Interacts with host GPS2. Interacts with host TNFRSF21; this interaction allows the modulation by the virus of JNK, p38 MAPK, STAT3, and Akt signaling pathways in a DR6-dependent manner. Interacts (via N-terminus) with host CIDEB (via N-terminus); this interaction seems to regulate the association of HCV particles with APOE. Interacts with host CHKA/Choline Kinase-alpha; CHKA bridges host PI4KA and NS5A and potentiates NS5A-stimulated PI4KA activity, which then facilitates the targeting of the ternary complex to the ER for viral replication. Interacts with host SPSB2 (via C-terminus); this interaction targets NS5A for ubiquitination and degradation. Interacts with host RAB18; this interaction may promote the association of NS5A and other replicase components with lipid droplets. Interacts (via region D2) with host PPIA/CYPA; the interaction stimulates RNA-binding ability of NS5A and is dependent on the peptidyl-prolyl cis-trans isomerase activity of PPIA/CYPA. Interacts with host TRIM14; this interaction induces the degradation of NS5A. Homooligomer. Interacts with non-structural protein 5A. Interacts with host VAPB. Interacts with host PRK2/PKN2. Interacts with host HNRNPA1 and SEPT6; these interactions facilitate viral replication. Part of the replication complex composed of NS2, NS3, NS4A, NS4B, NS5A and the RNA-directed RNA polymerase. Zn(2+) serves as cofactor. Requires Mg(2+) as cofactor. Specific enzymatic cleavages in vivo yield mature proteins. The structural proteins, core, E1, E2 and p7 are produced by proteolytic processing by host signal peptidases. The core protein precursor is synthesized as a 23 kDa, which is retained in the ER membrane through the hydrophobic signal peptide. Cleavage by the signal peptidase releases the 21 kDa mature core protein. The cleavage of the core protein precursor occurs between aminoacids 176 and 188 but the exact cleavage site is not known. Some degraded forms of the core protein appear as well during the course of infection. The other proteins (p7, NS2, NS3, NS4A, NS4B, NS5A and NS5B) are cleaved by the viral proteases. Autoprocessing between NS2 and NS3 is mediated by the NS2 cysteine protease catalytic domain and regulated by the NS3 N-terminal domain. In terms of processing, phosphorylated by host PKC and PKA. Post-translationally, ubiquitinated; mediated by UBE3A and leading to core protein subsequent proteasomal degradation. Highly N-glycosylated. In terms of processing, palmitoylation is required for NS2/3 autoprocessing and E2 recruitment to membranes. Post-translationally, palmitoylated. This modification may play a role in its polymerization or in protein-protein interactions. Phosphorylated on serines in a basal form termed p56. p58 is a hyperphosphorylated form of p56. p56 and p58 coexist in the cell in roughly equivalent amounts. Hyperphosphorylation is dependent on the presence of NS4A. Host CSNK1A1/CKI-alpha or RPS6KB1 kinases may be responsible for NS5A phosphorylation. In terms of processing, tyrosine phosphorylation is essential for the interaction with host SRC. Post-translationally, the N-terminus is phosphorylated by host PRK2/PKN2.

It localises to the host endoplasmic reticulum membrane. It is found in the host mitochondrion membrane. The protein resides in the virion. The protein localises to the host cytoplasm. Its subcellular location is the host nucleus. It localises to the host lipid droplet. It is found in the virion membrane. The protein resides in the host mitochondrion. The protein localises to the host cell membrane. Its subcellular location is the host perinuclear region. It carries out the reaction Hydrolysis of four peptide bonds in the viral precursor polyprotein, commonly with Asp or Glu in the P6 position, Cys or Thr in P1 and Ser or Ala in P1'.. The enzyme catalyses a ribonucleoside 5'-triphosphate + H2O = a ribonucleoside 5'-diphosphate + phosphate + H(+). It catalyses the reaction ATP + H2O = ADP + phosphate + H(+). The catalysed reaction is RNA(n) + a ribonucleoside 5'-triphosphate = RNA(n+1) + diphosphate. Inhibited by the antiviral drug hexamethylene amiloride. Inhibition by amantadine appears to be genotype-dependent. Also inhibited by long-alkyl-chain iminosugar derivatives. With respect to regulation, activity is up-regulated by PRK2/PKN2-mediated phosphorylation. Packages viral RNA to form a viral nucleocapsid, and promotes virion budding. Participates in the viral particle production as a result of its interaction with the non-structural protein 5A. Binds RNA and may function as a RNA chaperone to induce the RNA structural rearrangements taking place during virus replication. Modulates viral translation initiation by interacting with viral IRES and 40S ribosomal subunit. Affects various cell signaling pathways, host immunity and lipid metabolism. Prevents the establishment of cellular antiviral state by blocking the interferon-alpha/beta (IFN-alpha/beta) and IFN-gamma signaling pathways and by blocking the formation of phosphorylated STAT1 and promoting ubiquitin-mediated proteasome-dependent degradation of STAT1. Activates STAT3 leading to cellular transformation. Regulates the activity of cellular genes, including c-myc and c-fos. May repress the promoter of p53, and sequester CREB3 and SP110 isoform 3/Sp110b in the cytoplasm. Represses cell cycle negative regulating factor CDKN1A, thereby interrupting an important check point of normal cell cycle regulation. Targets transcription factors involved in the regulation of inflammatory responses and in the immune response: suppresses TNF-induced NF-kappa-B activation, and activates AP-1. Binds to dendritic cells (DCs) via C1QR1, resulting in down-regulation of T-lymphocytes proliferation. Alters lipid metabolism by interacting with hepatocellular proteins involved in lipid accumulation and storage. Induces up-regulation of FAS promoter activity, and thereby contributes to the increased triglyceride accumulation in hepatocytes (steatosis). Its function is as follows. Forms a heterodimer with envelope glycoprotein E2, which mediates virus attachment to the host cell, virion internalization through clathrin-dependent endocytosis and fusion with host membrane. Fusion with the host cell is most likely mediated by both E1 and E2, through conformational rearrangements of the heterodimer required for fusion rather than a classical class II fusion mechanism. E1/E2 heterodimer binds host apolipoproteins such as APOB and ApoE thereby forming a lipo-viro-particle (LVP). APOE associated to the LVP allows the initial virus attachment to cell surface receptors such as the heparan sulfate proteoglycans (HSPGs), syndecan-1 (SDC1), syndecan-1 (SDC2), the low-density lipoprotein receptor (LDLR) and scavenger receptor class B type I (SCARB1). The cholesterol transfer activity of SCARB1 allows E2 exposure and binding of E2 to SCARB1 and the tetraspanin CD81. E1/E2 heterodimer binding on CD81 activates the epithelial growth factor receptor (EGFR) signaling pathway. Diffusion of the complex E1-E2-EGFR-SCARB1-CD81 to the cell lateral membrane allows further interaction with Claudin 1 (CLDN1) and occludin (OCLN) to finally trigger HCV entry. Functionally, forms a heterodimer with envelope glycoprotein E1, which mediates virus attachment to the host cell, virion internalization through clathrin-dependent endocytosis and fusion with host membrane. Fusion with the host cell is most likely mediated by both E1 and E2, through conformational rearrangements of the heterodimer required for fusion rather than a classical class II fusion mechanism. The interaction between envelope glycoprotein E2 and host apolipoprotein E/APOE allows the proper assembly, maturation and infectivity of the viral particles. This interaction is probably promoted via the up-regulation of cellular autophagy by the virus. E1/E2 heterodimer binds host apolipoproteins such as APOB and APOE thereby forming a lipo-viro-particle (LVP). APOE associated to the LVP allows the initial virus attachment to cell surface receptors such as the heparan sulfate proteoglycans (HSPGs), syndecan-1 (SDC1), syndecan-1 (SDC2), the low-density lipoprotein receptor (LDLR) and scavenger receptor class B type I (SCARB1). The cholesterol transfer activity of SCARB1 allows E2 exposure and binding of E2 to SCARB1 and the tetraspanin CD81. E1/E2 heterodimer binding on CD81 activates the epithelial growth factor receptor (EGFR) signaling pathway. Diffusion of the complex E1-E2-EGFR-SCARB1-CD81 to the cell lateral membrane allows further interaction with Claudin 1 (CLDN1) and occludin (OCLN) to finally trigger HCV entry. Inhibits host EIF2AK2/PKR activation, preventing the establishment of an antiviral state. Viral ligand for CD209/DC-SIGN and CLEC4M/DC-SIGNR, which are respectively found on dendritic cells (DCs), and on liver sinusoidal endothelial cells and macrophage-like cells of lymph node sinuses. These interactions allow the capture of circulating HCV particles by these cells and subsequent facilitated transmission to permissive cells such as hepatocytes and lymphocyte subpopulations. The interaction between E2 and host amino acid transporter complex formed by SLC3A2 and SLC7A5/LAT1 may facilitate viral entry into host cell. In terms of biological role, ion channel protein that acts as a viroporin and plays an essential role in the assembly, envelopment and secretion of viral particles. Regulates the host cell secretory pathway, which induces the intracellular retention of viral glycoproteins and favors assembly of viral particles. Creates a pore in acidic organelles and releases Ca(2+) and H(+) in the cytoplasm of infected cells, leading to a productive viral infection. High levels of cytoplasmic Ca(2+) may trigger membrane trafficking and transport of viral ER-associated proteins to viroplasms, sites of viral genome replication. This ionic imbalance induces the assembly of the inflammasome complex, which triggers the maturation of pro-IL-1beta into IL-1beta through the action of caspase-1. Targets also host mitochondria and induces mitochondrial depolarization. In addition of its role as a viroporin, acts as a lipid raft adhesion factor. Cysteine protease required for the proteolytic auto-cleavage between the non-structural proteins NS2 and NS3. The N-terminus of NS3 is required for the function of NS2 protease (active region NS2-3). Promotes the initiation of viral particle assembly by mediating the interaction between structural and non-structural proteins. Its function is as follows. Displays three enzymatic activities: serine protease with a chymotrypsin-like fold, NTPase and RNA helicase. NS3 serine protease, in association with NS4A, is responsible for the cleavages of NS3-NS4A, NS4A-NS4B, NS4B-NS5A and NS5A-NS5B. The NS3/NS4A complex prevents phosphorylation of host IRF3, thus preventing the establishment of dsRNA induced antiviral state. The NS3/NS4A complex induces host amino acid transporter component SLC3A2, thus contributing to HCV propagation. NS3 RNA helicase binds to RNA and unwinds both dsDNA and dsRNA in the 3' to 5' direction, and likely resolves RNA complicated stable secondary structures in the template strand. Binds a single ATP and catalyzes the unzipping of a single base pair of dsRNA. Inhibits host antiviral proteins TBK1 and IRF3 thereby preventing the establishment of an antiviral state. Cleaves host MAVS/CARDIF thereby preventing the establishment of an antiviral state. Cleaves host TICAM1/TRIF, thereby disrupting TLR3 signaling and preventing the establishment of an antiviral state. Functionally, peptide cofactor which forms a non-covalent complex with the N-terminal of NS3 serine protease. The NS3/NS4A complex prevents phosphorylation of host IRF3, thus preventing the establishment of dsRNA induced antiviral state. The NS3/NS4A complex induces host amino acid transporter component SLC3A2, thus contributing to HCV propagation. In terms of biological role, induces a specific membrane alteration that serves as a scaffold for the virus replication complex. This membrane alteration gives rise to the so-called ER-derived membranous web that contains the replication complex. NS4B self-interaction contributes to its function in membranous web formation. Promotes host TRIF protein degradation in a CASP8-dependent manner thereby inhibiting host TLR3-mediated interferon signaling. Disrupts the interaction between STING and TBK1 contributing to the inhibition of interferon signaling. Phosphorylated protein that is indispensable for viral replication and assembly. Both hypo- and hyperphosphorylated states are required for the viral life cycle. The hyperphosphorylated form of NS5A is an inhibitor of viral replication. Involved in RNA-binding and especially in binding to the viral genome. Zinc is essential for RNA-binding. Participates in the viral particle production as a result of its interaction with the mature viral core protein. Its interaction with host VAPB may target the viral replication complex to vesicles. Down-regulates viral IRES translation initiation. Mediates interferon resistance, presumably by interacting with and inhibiting host EIF2AK2/PKR. Prevents BIN1-induced apoptosis. Acts as a transcriptional activator of some host genes important for viral replication when localized in the nucleus. Via the interaction with host PACSIN2, modulates lipid droplet formation in order to promote virion assembly. Modulates TNFRSF21/DR6 signaling pathway for viral propagation. Its function is as follows. RNA-dependent RNA polymerase that performs primer-template recognition and RNA synthesis during viral replication. Initiates RNA transcription/replication at a flavin adenine dinucleotide (FAD), resulting in a 5'- FAD cap on viral RNAs. In this way, recognition of viral 5' RNA by host pattern recognition receptors can be bypassed, thereby evading activation of antiviral pathways. The sequence is that of Genome polyprotein from Hepatitis C virus genotype 6d (isolate VN235) (HCV).